The primary structure comprises 339 residues: NADH-quinone oxidoreductase subunit H (339 aa).

9 helical membrane-spanning segments follow: residues 9 to 29 (IFPL…LILC), 50 to 70 (PNVV…KLLF), 82 to 102 (ILFI…WAVI), 115 to 135 (VGVL…IIAG), 161 to 181 (MGLV…SGII), 187 to 207 (MPWW…ISVL), 235 to 255 (MGFA…SAMT), 275 to 295 (IPGF…FLWI), and 311 to 331 (GWKV…SVLV).

This sequence belongs to the complex I subunit 1 family. In terms of assembly, NDH-1 is composed of 14 different subunits. Subunits NuoA, H, J, K, L, M, N constitute the membrane sector of the complex.

It localises to the cell inner membrane. The catalysed reaction is a quinone + NADH + 5 H(+)(in) = a quinol + NAD(+) + 4 H(+)(out). NDH-1 shuttles electrons from NADH, via FMN and iron-sulfur (Fe-S) centers, to quinones in the respiratory chain. The immediate electron acceptor for the enzyme in this species is believed to be ubiquinone. Couples the redox reaction to proton translocation (for every two electrons transferred, four hydrogen ions are translocated across the cytoplasmic membrane), and thus conserves the redox energy in a proton gradient. This subunit may bind ubiquinone. The protein is NADH-quinone oxidoreductase subunit H of Rickettsia felis (strain ATCC VR-1525 / URRWXCal2) (Rickettsia azadi).